Consider the following 353-residue polypeptide: Rhodopsin (353 aa).

Residues 1–36 (MNGTEGPFFYVPMVNTTGIVRSPYDYPQYYLVSPAA) are Extracellular-facing. N2 and N15 each carry an N-linked (GlcNAc...) asparagine glycan. The chain crosses the membrane as a helical span at residues 37-61 (YAALGAYMFLLILLGFPINFLTLYV). Topologically, residues 62–73 (TIEHKKLRTPLN) are cytoplasmic. A helical transmembrane segment spans residues 74 to 96 (YILLNLAVADLFMVFGGFTTTMY). At 97 to 110 (TSMHGYFVLGRLGC) the chain is on the extracellular side. C110 and C187 are disulfide-bonded. Residues 111–133 (NMEGFFATLGGEIGLWSLVVLAV) form a helical membrane-spanning segment. Residues 134 to 136 (ERW) carry the 'Ionic lock' involved in activated form stabilization motif. Residues 134 to 152 (ERWLVVCKPISNFRFGENH) are Cytoplasmic-facing. A helical membrane pass occupies residues 153–173 (AIMGLAFTWVMACSCAVPPLV). Topologically, residues 174-202 (GWSRYIPEGMQCSCGVDYYTRAEGFNNES) are extracellular. N-linked (GlcNAc...) asparagine glycosylation is present at N200. Residues 203 to 224 (FVIYMFACHFIIPMCVVFFCYG) traverse the membrane as a helical segment. Over 225–252 (RLLCAVKEAAAAQQESETTQRAEKEVTR) the chain is Cytoplasmic. A helical membrane pass occupies residues 253-274 (MVVIMGIAFLICWCPYASVAWY). The Extracellular segment spans residues 275–286 (IFTHQGSEFGPV). A helical transmembrane segment spans residues 287-308 (FMTLPAFFAKTSSVYNPLIYIL). K296 is modified (N6-(retinylidene)lysine). Residues 309–353 (MNKQFRHCMITTLCCGKNPFEEEEGASTASKTEASSVSSSSVSPA) are Cytoplasmic-facing. Residues C322 and C323 are each lipidated (S-palmitoyl cysteine). Residues 331–353 (EEGASTASKTEASSVSSSSVSPA) are disordered. Residues 334-353 (ASTASKTEASSVSSSSVSPA) show a composition bias toward low complexity.

Belongs to the G-protein coupled receptor 1 family. Opsin subfamily. Post-translationally, phosphorylated on some or all of the serine and threonine residues present in the C-terminal region. Contains one covalently linked retinal chromophore.

Its subcellular location is the membrane. It is found in the cell projection. The protein resides in the cilium. The protein localises to the photoreceptor outer segment. Photoreceptor required for image-forming vision at low light intensity. While most salt water fish species use retinal as chromophore, most freshwater fish use 3-dehydroretinal, or a mixture of retinal and 3-dehydroretinal. Light-induced isomerization of 11-cis to all-trans retinal triggers a conformational change that activates signaling via G-proteins. Subsequent receptor phosphorylation mediates displacement of the bound G-protein alpha subunit by arrestin and terminates signaling. This Dicentrarchus labrax (European seabass) protein is Rhodopsin (rho).